The following is a 267-amino-acid chain: 14-3-3-like protein GF14 phi (267 aa).

An N-acetylalanine modification is found at Ala2. Phosphoserine occurs at positions 73 and 196. Phosphothreonine is present on Thr217. Residues 244–267 (MQDESPEEIKEAAAPKPAEEQKEI) form a disordered region. Ser248 is subject to Phosphoserine. The segment covering 250-267 (EEIKEAAAPKPAEEQKEI) has biased composition (basic and acidic residues).

It belongs to the 14-3-3 family. As to quaternary structure, interacts with FD. Interacts with CINV1.

The protein resides in the nucleus. Its subcellular location is the cytoplasm. Its function is as follows. Is associated with a DNA binding complex that binds to the G box, a well-characterized cis-acting DNA regulatory element found in plant genes. This Arabidopsis thaliana (Mouse-ear cress) protein is 14-3-3-like protein GF14 phi (GRF4).